A 797-amino-acid chain; its full sequence is LPS-assembly protein LptD (797 aa).

Residues 1–20 (MHTIRCLILSALSVAGAAQA) form the signal peptide. Residues 23–45 (SQDAAPAGRQPVGSVASPGLEMP) are disordered.

Belongs to the LptD family. As to quaternary structure, component of the lipopolysaccharide transport and assembly complex. Interacts with LptE and LptA.

Its subcellular location is the cell outer membrane. Its function is as follows. Together with LptE, is involved in the assembly of lipopolysaccharide (LPS) at the surface of the outer membrane. This is LPS-assembly protein LptD from Bordetella avium (strain 197N).